The chain runs to 300 residues: Acetyl-coenzyme A carboxylase carboxyl transferase subunit beta 2 (300 aa).

The 269-residue stretch at 26-294 (VWIKCPSCRE…ATAHKSEPIV (269 aa)) folds into the CoA carboxyltransferase N-terminal domain. The Zn(2+) site is built by C30, C33, C49, and C51. Residues 30–51 (CPSCRELIYHKQLAERMKVCRC) form a C4-type zinc finger.

It belongs to the AccD/PCCB family. In terms of assembly, acetyl-CoA carboxylase is a heterohexamer composed of biotin carboxyl carrier protein (AccB), biotin carboxylase (AccC) and two subunits each of ACCase subunit alpha (AccA) and ACCase subunit beta (AccD). Zn(2+) is required as a cofactor.

The protein localises to the cytoplasm. The catalysed reaction is N(6)-carboxybiotinyl-L-lysyl-[protein] + acetyl-CoA = N(6)-biotinyl-L-lysyl-[protein] + malonyl-CoA. The protein operates within lipid metabolism; malonyl-CoA biosynthesis; malonyl-CoA from acetyl-CoA: step 1/1. Functionally, component of the acetyl coenzyme A carboxylase (ACC) complex. Biotin carboxylase (BC) catalyzes the carboxylation of biotin on its carrier protein (BCCP) and then the CO(2) group is transferred by the transcarboxylase to acetyl-CoA to form malonyl-CoA. The protein is Acetyl-coenzyme A carboxylase carboxyl transferase subunit beta 2 of Roseiflexus sp. (strain RS-1).